The following is a 229-amino-acid chain: Protein MC132 (229 aa).

As to quaternary structure, interacts with host RELA (via RHD domain), ELOB, ELOC and CUL5; these interactions induce the proteasomal degradation of host RELA.

Its subcellular location is the host cytoplasm. Its function is as follows. Inhibits host NF-kappa-B activation stimulated by IL-1 and multiple PRR viral detection pathways. Targets host NF-kappa-B component RELA/p65 for ubiquitin-dependent proteasomal degradation. The polypeptide is Protein MC132 (MC132) (Homo sapiens (Human)).